The following is an 886-amino-acid chain: Cadherin-1 (886 aa).

The first 23 residues, 1–23 (MGARCRSFSALLLLLQVSSWLCQ), serve as a signal peptide directing secretion. Residues 24–158 (QPESESDSCR…FHQGLRRQKR (135 aa)) constitute a propeptide that is removed on maturation. Residues 24–713 (QPESESDSCR…SLEAGLQVPA (690 aa)) lie on the Extracellular side of the membrane. 5 Cadherin domains span residues 159–266 (DWVI…RPEF), 267–379 (IQEV…APIF), 380–490 (NPST…APIF), 491–597 (VPAE…DNAP), and 598–701 (IPEP…NCMK). Asp-261 contacts Ca(2+). Ser-284 and Ser-289 each carry an O-linked (Man...) serine glycan. Asp-292 provides a ligand contact to Ca(2+). O-linked (Man...) threonine glycans are attached at residues Thr-362, Thr-474, Thr-476, and Thr-513. The N-linked (GlcNAc...) asparagine glycan is linked to Asn-562. Thr-580, Thr-582, and Thr-584 each carry an O-linked (Man...) threonine glycan. Asn-641 carries N-linked (GlcNAc...) asparagine glycosylation. The helical transmembrane segment at 714–734 (ILGILGGILALLILILLLLLF) threads the bilayer. At 735–886 (LRRRTVVKEP…ADMYGGGEED (152 aa)) the chain is on the cytoplasmic side. Residues 751 to 771 (DTRDNVYYYDEEGGGEEDQDF) are disordered. Phosphotyrosine; by SRC occurs at positions 757, 758, and 759. Acidic residues predominate over residues 759–771 (YDEEGGGEEDQDF). The tract at residues 762 to 773 (EGGGEEDQDFDL) is required for binding CTNND1 and PSEN1. Phosphoserine occurs at positions 774, 797, 842, 844, and 850. A required for binding alpha, beta and region spans residues 815-886 (IDENLKAADS…ADMYGGGEED (72 aa)).

Homodimer; disulfide-linked. Component of an E-cadherin/ catenin adhesion complex composed of at least E-cadherin/CDH1, beta-catenin/CTNNB1 or gamma-catenin/JUP, and potentially alpha-catenin/CTNNA1; the complex is located to adherens junctions. Found in a complex composed of CDH1, RAP1A and PKP3; PKP3 acts as a scaffold protein within the complex, the complex is required for CDH1 localization to mature desmosome cell junctions. Interacts with the TRPV4 and CTNNB1 complex. Interacts with CTNND1. The stable association of CTNNA1 is controversial as CTNNA1 was shown not to bind to F-actin when assembled in the complex. Alternatively, the CTNNA1-containing complex may be linked to F-actin by other proteins such as LIMA1. Interaction with PSEN1, cleaves CDH1 resulting in the disassociation of cadherin-based adherens junctions (CAJs). Interacts with AJAP1 and DLGAP5. Interacts with TBC1D2. Interacts with LIMA1. Interacts with CAV1. Interacts with PIP5K1C. Interacts with DDR1; this stabilizes CDH1 at the cell surface and inhibits its internalization. Interacts with RAPGEF2. Interacts with RAB8B. Interacts with KLRG1. Forms a ternary complex composed of ADAM10, CADH1 and EPHA4; within the complex, CADH1 is cleaved by ADAM10 which disrupts adherens junctions. Interacts with SPEF1. Interacts with CTNNB1 and PKP2. Interacts with AMOTL2; the interaction may facilitate binding of radial actin fibers to cell junction complexes. Interacts with DSG3; the interaction is required for CDH1 localization to developing adherens junctions. Post-translationally, during apoptosis or with calcium influx, cleaved by a membrane-bound metalloproteinase (ADAM10), PS1/gamma-secretase and caspase-3. Processing by the metalloproteinase, induced by calcium influx, causes disruption of cell-cell adhesion and the subsequent release of beta-catenin into the cytoplasm. The residual membrane-tethered cleavage product is rapidly degraded via an intracellular proteolytic pathway. Cleavage by caspase-3 releases the cytoplasmic tail resulting in disintegration of the actin microfilament system. The gamma-secretase-mediated cleavage promotes disassembly of adherens junctions. During development of the cochlear organ of Corti, cleavage by ADAM10 at adherens junctions promotes pillar cell separation. N-glycosylation at Asn-641 is essential for expression, folding and trafficking. Addition of bisecting N-acetylglucosamine by MGAT3 modulates its cell membrane location. In terms of processing, ubiquitinated by a SCF complex containing SKP2, which requires prior phosphorylation by CK1/CSNK1A1. Ubiquitinated by CBLL1/HAKAI, requires prior phosphorylation at Tyr-758. Post-translationally, O-glycosylated. O-manosylated by TMTC1, TMTC2, TMTC3 or TMTC4. Ser-289 and Thr-513 are O-manosylated by TMTC2 or TMTC4 but not TMTC1 or TMTC3.

It is found in the cell junction. Its subcellular location is the adherens junction. The protein resides in the cell membrane. The protein localises to the endosome. It localises to the golgi apparatus. It is found in the trans-Golgi network. Its subcellular location is the cytoplasm. The protein resides in the desmosome. Its function is as follows. Cadherins are calcium-dependent cell adhesion proteins. They preferentially interact with themselves in a homophilic manner in connecting cells; cadherins may thus contribute to the sorting of heterogeneous cell types. CDH1 is involved in mechanisms regulating cell-cell adhesions, mobility and proliferation of epithelial cells. Promotes organization of radial actin fiber structure and cellular response to contractile forces, via its interaction with AMOTL2 which facilitates anchoring of radial actin fibers to CDH1 junction complexes at the cell membrane. Plays a role in the early stages of desmosome cell-cell junction formation via facilitating the recruitment of DSG2 and DSP to desmosome plaques. Has a potent invasive suppressor role. It is a ligand for integrin alpha-E/beta-7. E-Cad/CTF2 promotes non-amyloidogenic degradation of Abeta precursors. Has a strong inhibitory effect on APP C99 and C83 production. The protein is Cadherin-1 (Cdh1) of Rattus norvegicus (Rat).